Reading from the N-terminus, the 243-residue chain is tRNA pseudouridine synthase A (243 aa).

D54 (nucleophile) is an active-site residue. Y112 is a binding site for substrate.

This sequence belongs to the tRNA pseudouridine synthase TruA family. Homodimer.

The enzyme catalyses uridine(38/39/40) in tRNA = pseudouridine(38/39/40) in tRNA. Its function is as follows. Formation of pseudouridine at positions 38, 39 and 40 in the anticodon stem and loop of transfer RNAs. The sequence is that of tRNA pseudouridine synthase A from Aster yellows witches'-broom phytoplasma (strain AYWB).